Here is a 194-residue protein sequence, read N- to C-terminus: Inosine triphosphate pyrophosphatase (194 aa).

10–15 (TTNLKK) provides a ligand contact to ITP. Glu-36 lines the Mg(2+) pocket. Residues Lys-48, 66–67 (DT), Lys-83, Lys-166, and 171–172 (HR) contribute to the ITP site.

Belongs to the HAM1 NTPase family. Homodimer. Mg(2+) is required as a cofactor. The cofactor is Mn(2+).

The protein resides in the cytoplasm. Its subcellular location is the nucleus. The catalysed reaction is ITP + H2O = IMP + diphosphate + H(+). It catalyses the reaction dITP + H2O = dIMP + diphosphate + H(+). The enzyme catalyses XTP + H2O = XMP + diphosphate + H(+). Functionally, pyrophosphatase that hydrolyzes non-canonical purine nucleotides such as inosine triphosphate (ITP), deoxyinosine triphosphate (dITP) or xanthosine 5'-triphosphate (XTP) to their respective monophosphate derivatives. The enzyme does not distinguish between the deoxy- and ribose forms. Probably excludes non-canonical purines from RNA and DNA precursor pools, thus preventing their incorporation into RNA and DNA and avoiding chromosomal lesions. This chain is Inosine triphosphate pyrophosphatase, found in Encephalitozoon intestinalis (strain ATCC 50506) (Microsporidian parasite).